The sequence spans 140 residues: Nucleoside diphosphate kinase (140 aa).

Positions 11, 59, 87, 93, 104, and 114 each coordinate ATP. H117 serves as the catalytic Pros-phosphohistidine intermediate.

It belongs to the NDK family. In terms of assembly, homotetramer. Mg(2+) serves as cofactor.

It localises to the cytoplasm. The enzyme catalyses a 2'-deoxyribonucleoside 5'-diphosphate + ATP = a 2'-deoxyribonucleoside 5'-triphosphate + ADP. It carries out the reaction a ribonucleoside 5'-diphosphate + ATP = a ribonucleoside 5'-triphosphate + ADP. Its function is as follows. Major role in the synthesis of nucleoside triphosphates other than ATP. The ATP gamma phosphate is transferred to the NDP beta phosphate via a ping-pong mechanism, using a phosphorylated active-site intermediate. The protein is Nucleoside diphosphate kinase of Sinorhizobium fredii (strain NBRC 101917 / NGR234).